We begin with the raw amino-acid sequence, 503 residues long: Catalase (503 aa).

Residues 1–26 form a disordered region; the sequence is MAKDDKRLTGLFGHPVSDRENSMTAG. Active-site residues include histidine 56 and asparagine 129. Tyrosine 339 is a binding site for heme.

The protein belongs to the catalase family. In terms of assembly, homodimer. Heme serves as cofactor.

The catalysed reaction is 2 H2O2 = O2 + 2 H2O. Functionally, decomposes hydrogen peroxide into water and oxygen; serves to protect cells from the toxic effects of hydrogen peroxide. The sequence is that of Catalase (katA) from Staphylococcus haemolyticus (strain JCSC1435).